The chain runs to 465 residues: NADH-quinone oxidoreductase subunit N (465 aa).

13 consecutive transmembrane segments (helical) span residues 6–26, 30–50, 66–86, 98–118, 156–176, 194–214, 226–246, 261–281, 289–309, 317–337, 363–383, 391–411, and 432–452; these read ILPE…GIVF, TINL…ILSA, LYIR…LLLL, SILI…NNLI, ALSS…TGLV, IVFG…IAPF, PTIV…TFLI, FQPV…FGAL, LLAY…SIFT, LIYL…FIQI, ILLF…KLFI, GFIG…YYYL, and SLFI…MCVE.

This sequence belongs to the complex I subunit 2 family. As to quaternary structure, NDH-1 is composed of 14 different subunits. Subunits NuoA, H, J, K, L, M, N constitute the membrane sector of the complex.

The protein localises to the cell membrane. It catalyses the reaction a quinone + NADH + 5 H(+)(in) = a quinol + NAD(+) + 4 H(+)(out). Functionally, NDH-1 shuttles electrons from NADH, via FMN and iron-sulfur (Fe-S) centers, to quinones in the respiratory chain. The immediate electron acceptor for the enzyme in this species is believed to be ubiquinone. Couples the redox reaction to proton translocation (for every two electrons transferred, four hydrogen ions are translocated across the cytoplasmic membrane), and thus conserves the redox energy in a proton gradient. The protein is NADH-quinone oxidoreductase subunit N of Wolbachia sp. subsp. Brugia malayi (strain TRS).